The chain runs to 293 residues: ATP synthase gamma chain (293 aa).

This sequence belongs to the ATPase gamma chain family. In terms of assembly, F-type ATPases have 2 components, CF(1) - the catalytic core - and CF(0) - the membrane proton channel. CF(1) has five subunits: alpha(3), beta(3), gamma(1), delta(1), epsilon(1). CF(0) has three main subunits: a, b and c.

It is found in the cell inner membrane. In terms of biological role, produces ATP from ADP in the presence of a proton gradient across the membrane. The gamma chain is believed to be important in regulating ATPase activity and the flow of protons through the CF(0) complex. The chain is ATP synthase gamma chain from Psychrobacter sp. (strain PRwf-1).